Reading from the N-terminus, the 523-residue chain is Pentatricopeptide repeat-containing protein At1g64580 (523 aa).

PPR repeat units lie at residues 43–77 (HHHH…RPIP), 78–112 (SIVD…GISH), 113–147 (DLYS…GFRP), 148–182 (SIVT…GFVP), 183–217 (NVVI…GIRA), 218–252 (DAVT…KIDP), 253–287 (NVIF…SVVP), 288–322 (NVFT…GCFP), 323–357 (DVVT…GLVG), 358–392 (DAFT…GVSP), 393–427 (DIVT…EMDV), 428–462 (DIIT…GVKP), and 463–497 (DAIA…GFMP).

The protein belongs to the PPR family. P subfamily.

This chain is Pentatricopeptide repeat-containing protein At1g64580, found in Arabidopsis thaliana (Mouse-ear cress).